Reading from the N-terminus, the 502-residue chain is Probable cytochrome P450 554A1 (502 aa).

Residues 3–20 (LLLFIFFLILFYYSVKYY) traverse the membrane as a helical segment. Cys-448 is a binding site for heme.

The protein belongs to the cytochrome P450 family. Heme is required as a cofactor.

The protein resides in the membrane. The protein is Probable cytochrome P450 554A1 (cyp554A1) of Dictyostelium discoideum (Social amoeba).